We begin with the raw amino-acid sequence, 62 residues long: Translational regulator CsrA (62 aa).

It belongs to the CsrA/RsmA family. In terms of assembly, homodimer; the beta-strands of each monomer intercalate to form a hydrophobic core, while the alpha-helices form wings that extend away from the core.

The protein localises to the cytoplasm. In terms of biological role, a key translational regulator that binds mRNA to regulate translation initiation and/or mRNA stability. Mediates global changes in gene expression, shifting from rapid growth to stress survival by linking envelope stress, the stringent response and the catabolite repression systems. Usually binds in the 5'-UTR; binding at or near the Shine-Dalgarno sequence prevents ribosome-binding, repressing translation, binding elsewhere in the 5'-UTR can activate translation and/or stabilize the mRNA. Its function is antagonized by small RNA(s). This chain is Translational regulator CsrA, found in Idiomarina loihiensis (strain ATCC BAA-735 / DSM 15497 / L2-TR).